Reading from the N-terminus, the 294-residue chain is Mitochondrial substrate carrier family protein ucpB (294 aa).

Residues 1 to 10 (MTSQESIGIK) are Mitochondrial intermembrane-facing. Solcar repeat units follow at residues 9 to 93 (IKFL…IKNY), 101 to 187 (TNLL…IKHM), and 197 to 288 (DGLQ…LRKV). The helical transmembrane segment at 11 to 31 (FLFGGLSCMGAAVVSNPVDVL) threads the bilayer. The Mitochondrial matrix portion of the chain corresponds to 32–67 (KTRFQIHGEGIDSKSLGLVNGTIKIIKNEGISAMYK). Residues 68–88 (GLTPSLLREATYSTLRMGGYD) form a helical membrane-spanning segment. The Mitochondrial intermembrane portion of the chain corresponds to 89–106 (VIKNYFIDSNGKTNLLSK). A helical transmembrane segment spans residues 107–127 (VTSGALSGALGACITSPTDLI). At 128 to 161 (KVRMQASSKGVKYDSISSAFKEIIAKEGIKGLWK) the chain is on the mitochondrial matrix side. Residues 162-182 (GVGPTTQRAALLTASQIPSYD) form a helical membrane-spanning segment. Topologically, residues 183 to 192 (HIKHMILDHG) are mitochondrial intermembrane. The helical transmembrane segment at 193–213 (IIQVDGLQVHIVSSIFAGLIA) threads the bilayer. At 214–267 (SITTSPVDLVKTRIMNQPFDSNGVGLIYKSSYDCFKKTFQSEGISGLYKGFLPN) the chain is on the mitochondrial matrix side. Residues 268-285 (WFRIGPHTIVTFILYEYL) traverse the membrane as a helical segment. At 286–294 (RKVSGIKPI) the chain is on the mitochondrial intermembrane side.

This sequence belongs to the mitochondrial carrier (TC 2.A.29) family.

The protein localises to the mitochondrion inner membrane. In terms of biological role, mitochondrial solute carriers shuttle metabolites, nucleotides, and cofactors through the mitochondrial inner membrane. This chain is Mitochondrial substrate carrier family protein ucpB (ucpB), found in Dictyostelium discoideum (Social amoeba).